A 103-amino-acid chain; its full sequence is Small ribosomal subunit protein uS10 (103 aa).

Belongs to the universal ribosomal protein uS10 family. Part of the 30S ribosomal subunit.

Functionally, involved in the binding of tRNA to the ribosomes. The chain is Small ribosomal subunit protein uS10 from Neisseria gonorrhoeae.